A 340-amino-acid polypeptide reads, in one-letter code: Uroporphyrinogen decarboxylase (340 aa).

Residues 23 to 27 (RQAGR), Asp72, Tyr147, Thr202, and His316 contribute to the substrate site.

The protein belongs to the uroporphyrinogen decarboxylase family. As to quaternary structure, homodimer.

It is found in the cytoplasm. The enzyme catalyses uroporphyrinogen III + 4 H(+) = coproporphyrinogen III + 4 CO2. The protein operates within porphyrin-containing compound metabolism; protoporphyrin-IX biosynthesis; coproporphyrinogen-III from 5-aminolevulinate: step 4/4. Catalyzes the decarboxylation of four acetate groups of uroporphyrinogen-III to yield coproporphyrinogen-III. The polypeptide is Uroporphyrinogen decarboxylase (Pelobacter propionicus (strain DSM 2379 / NBRC 103807 / OttBd1)).